Reading from the N-terminus, the 324-residue chain is Beta-ketoacyl-[acyl-carrier-protein] synthase III (324 aa).

Catalysis depends on residues cysteine 112 and histidine 249. The interval 250–254 (QANDR) is ACP-binding. Residue asparagine 279 is part of the active site.

It belongs to the thiolase-like superfamily. FabH family. As to quaternary structure, homodimer.

The protein localises to the cytoplasm. It catalyses the reaction malonyl-[ACP] + acetyl-CoA + H(+) = 3-oxobutanoyl-[ACP] + CO2 + CoA. The protein operates within lipid metabolism; fatty acid biosynthesis. Its function is as follows. Catalyzes the condensation reaction of fatty acid synthesis by the addition to an acyl acceptor of two carbons from malonyl-ACP. Catalyzes the first condensation reaction which initiates fatty acid synthesis and may therefore play a role in governing the total rate of fatty acid production. Possesses both acetoacetyl-ACP synthase and acetyl transacylase activities. Its substrate specificity determines the biosynthesis of branched-chain and/or straight-chain of fatty acids. This Streptococcus pneumoniae serotype 2 (strain D39 / NCTC 7466) protein is Beta-ketoacyl-[acyl-carrier-protein] synthase III.